The chain runs to 200 residues: Transcription elongation factor A protein-like 5 (200 aa).

Composition is skewed to basic and acidic residues over residues 1–49 (MEKF…KLEV), 61–85 (GEGK…KPDS), 94–106 (RAAE…DYVP), 114–153 (DRGT…EELR), and 190–200 (GQKDLEDAPFV). Residues 1–200 (MEKFYKENEG…QKDLEDAPFV (200 aa)) form a disordered region.

This sequence belongs to the TFS-II family. TFA subfamily.

It localises to the nucleus. May be involved in transcriptional regulation. This chain is Transcription elongation factor A protein-like 5 (Tceal5), found in Mus musculus (Mouse).